Here is a 412-residue protein sequence, read N- to C-terminus: NAD-dependent dihydropyrimidine dehydrogenase subunit PreT (412 aa).

Glutamate 286 is a binding site for NAD(+).

Belongs to the NADH dehydrogenase family. In terms of assembly, heterotetramer of 2 PreA and 2 PreT subunits.

It carries out the reaction 5,6-dihydrouracil + NAD(+) = uracil + NADH + H(+). It catalyses the reaction 5,6-dihydrothymine + NAD(+) = thymine + NADH + H(+). In terms of biological role, involved in pyrimidine base degradation. Catalyzes physiologically the reduction of uracil to 5,6-dihydrouracil (DHU) by using NADH as a specific cosubstrate. It also catalyzes the reverse reaction and the reduction of thymine to 5,6-dihydrothymine (DHT). The sequence is that of NAD-dependent dihydropyrimidine dehydrogenase subunit PreT (preT) from Escherichia coli (strain K12).